The chain runs to 152 residues: MSEEQQVQPQLALERIYTKDISFEVPGAQVFTKQWQPELNINLSSAAEKIDPTHFEVSLKVVVQANNDNETAFIVDVTQSGIFLIDNIEEDRLPYILGAYCPNILFPFLREAVNDLVTKGSFPQLLLTPINFDAEFEANMQRAQAAAVEGQA.

Belongs to the SecB family. As to quaternary structure, homotetramer, a dimer of dimers. One homotetramer interacts with 1 SecA dimer.

The protein resides in the cytoplasm. Its function is as follows. One of the proteins required for the normal export of preproteins out of the cell cytoplasm. It is a molecular chaperone that binds to a subset of precursor proteins, maintaining them in a translocation-competent state. It also specifically binds to its receptor SecA. In Acinetobacter baumannii (strain AB307-0294), this protein is Protein-export protein SecB.